Consider the following 350-residue polypeptide: Probable 2-dehydropantoate 2-reductase (350 aa).

Residues 9 to 14 (GAGSIG) and N115 each bind NADP(+). N115 is a substrate binding site. K213 functions as the Proton donor in the catalytic mechanism. Residues N217, N221, and S295 each contribute to the substrate site. Residue E307 coordinates NADP(+).

It belongs to the ketopantoate reductase family.

It carries out the reaction (R)-pantoate + NADP(+) = 2-dehydropantoate + NADPH + H(+). It participates in cofactor biosynthesis; (R)-pantothenate biosynthesis; (R)-pantoate from 3-methyl-2-oxobutanoate: step 2/2. Functionally, catalyzes the NADPH-dependent reduction of ketopantoate into pantoic acid. The sequence is that of Probable 2-dehydropantoate 2-reductase from Schizosaccharomyces pombe (strain 972 / ATCC 24843) (Fission yeast).